The following is a 756-amino-acid chain: Putative DNA ligase 052L (756 aa).

Lysine 103 acts as the N6-AMP-lysine intermediate in catalysis. The span at 610 to 620 (PSAAGSASPCR) shows a compositional bias: low complexity. The disordered stretch occupies residues 610–630 (PSAAGSASPCRPTKRRDDWFD). The 95-residue stretch at 648 to 742 (KKRPPMQGYV…LKRQRKCRAR (95 aa)) folds into the BRCT domain.

Belongs to the NAD-dependent DNA ligase family.

The catalysed reaction is NAD(+) + (deoxyribonucleotide)n-3'-hydroxyl + 5'-phospho-(deoxyribonucleotide)m = (deoxyribonucleotide)n+m + AMP + beta-nicotinamide D-nucleotide.. Functionally, catalyzes the formation of phosphodiester linkages between 5'-phosphoryl and 3'-hydroxyl groups in double-stranded DNA using NAD as a coenzyme and as the energy source for the reaction. This is Putative DNA ligase 052L from Invertebrate iridescent virus 3 (IIV-3).